Reading from the N-terminus, the 681-residue chain is Potassium-transporting ATPase ATP-binding subunit (681 aa).

The next 4 membrane-spanning stretches (helical) occupy residues 30–50 (LLVYVGAILATSLYFLGFFGI), 59–79 (LAIALILWFTVLFANFAEAIA), 216–236 (ILLVTLSIIFLAVSATLLPFT), and 255–275 (IALLVCLAPTTIGALLSSIGI). Catalysis depends on Asp306, which acts as the 4-aspartylphosphate intermediate. Residues Asp343, Glu347, 376 to 383 (FTATTRMS), and Lys394 each bind ATP. Asp517 and Asp521 together coordinate Mg(2+). 3 consecutive transmembrane segments (helical) span residues 587–607 (FAIIPVLFYGIFPQLEALNLM), 615–635 (AILSAIIYNALIIIFLIPLSL), and 661–681 (LVAPFIAIKLIDMLLTVLGIV).

The protein belongs to the cation transport ATPase (P-type) (TC 3.A.3) family. Type IA subfamily. In terms of assembly, the system is composed of three essential subunits: KdpA, KdpB and KdpC.

The protein resides in the cell membrane. The enzyme catalyses K(+)(out) + ATP + H2O = K(+)(in) + ADP + phosphate + H(+). Functionally, part of the high-affinity ATP-driven potassium transport (or Kdp) system, which catalyzes the hydrolysis of ATP coupled with the electrogenic transport of potassium into the cytoplasm. This subunit is responsible for energy coupling to the transport system and for the release of the potassium ions to the cytoplasm. The chain is Potassium-transporting ATPase ATP-binding subunit from Listeria welshimeri serovar 6b (strain ATCC 35897 / DSM 20650 / CCUG 15529 / CIP 8149 / NCTC 11857 / SLCC 5334 / V8).